The primary structure comprises 218 residues: MGQKINPLGFRLGTTQDHYSLWFAQPKNFSEGLQEDQKIRNCIKNYVQKNMKISSGVEGIGHIEIQKRIDVIQVIIYLGFPKFLTEGKPKRIKELQINVQKELNCMNRKLNISITRIENPYMHPNVLAEFIAGQLKNRVSFRKAMKKAIELTEQSNTKGIQVQIAGRLDGKEIARAEWVREGRVPLQTLRAKINYCSYTVRTIYGVLGIKIWIFVDEE.

The KH type-2 domain occupies 43 to 118 (IKNYVQKNMK…KLNISITRIE (76 aa)).

The protein belongs to the universal ribosomal protein uS3 family. Part of the 30S ribosomal subunit.

Its subcellular location is the plastid. The protein resides in the chloroplast. The polypeptide is Small ribosomal subunit protein uS3c (rps3) (Populus alba (White poplar)).